Consider the following 276-residue polypeptide: Pantothenate synthetase (276 aa).

25–32 (MGYLHRGH) serves as a coordination point for ATP. His32 functions as the Proton donor in the catalytic mechanism. Gln56 contributes to the (R)-pantoate binding site. Beta-alanine is bound at residue Gln56. Residue 143–146 (GEKD) coordinates ATP. Gln149 provides a ligand contact to (R)-pantoate. ATP is bound by residues Val172 and 180-183 (LSSR).

Belongs to the pantothenate synthetase family. As to quaternary structure, homodimer.

Its subcellular location is the cytoplasm. The enzyme catalyses (R)-pantoate + beta-alanine + ATP = (R)-pantothenate + AMP + diphosphate + H(+). The protein operates within cofactor biosynthesis; (R)-pantothenate biosynthesis; (R)-pantothenate from (R)-pantoate and beta-alanine: step 1/1. Its function is as follows. Catalyzes the condensation of pantoate with beta-alanine in an ATP-dependent reaction via a pantoyl-adenylate intermediate. The sequence is that of Pantothenate synthetase from Thermus thermophilus (strain ATCC BAA-163 / DSM 7039 / HB27).